The following is a 435-amino-acid chain: Cyclin-J-like protein (435 aa).

The Cyclin N-terminal domain maps to D14–C191. A disordered region spans residues S120–G142.

The protein belongs to the cyclin family. Cyclin J subfamily.

The polypeptide is Cyclin-J-like protein (CCNJL) (Homo sapiens (Human)).